A 170-amino-acid chain; its full sequence is Ribosome maturation factor RimM (170 aa).

The PRC barrel domain occupies glutamate 96–leucine 169.

This sequence belongs to the RimM family. Binds ribosomal protein uS19.

It localises to the cytoplasm. In terms of biological role, an accessory protein needed during the final step in the assembly of 30S ribosomal subunit, possibly for assembly of the head region. Essential for efficient processing of 16S rRNA. May be needed both before and after RbfA during the maturation of 16S rRNA. It has affinity for free ribosomal 30S subunits but not for 70S ribosomes. This chain is Ribosome maturation factor RimM, found in Sorangium cellulosum (strain So ce56) (Polyangium cellulosum (strain So ce56)).